The primary structure comprises 299 residues: Acetaldehyde dehydrogenase 1 (299 aa).

Residue Cys-130 is the Acyl-thioester intermediate of the active site. NAD(+) is bound by residues 161-169 (SVGPGTRKN) and Asn-272.

Belongs to the acetaldehyde dehydrogenase family.

It carries out the reaction acetaldehyde + NAD(+) + CoA = acetyl-CoA + NADH + H(+). This chain is Acetaldehyde dehydrogenase 1 (mhpF), found in Burkholderia cenocepacia (strain ATCC BAA-245 / DSM 16553 / LMG 16656 / NCTC 13227 / J2315 / CF5610) (Burkholderia cepacia (strain J2315)).